We begin with the raw amino-acid sequence, 346 residues long: Probable RNA methyltransferase PA14_40730 (346 aa).

E91 acts as the Proton acceptor in catalysis. In terms of domain architecture, Radical SAM core spans 94–320 (LLPRGGLCVS…TKVRNSAGQD (227 aa)). An intrachain disulfide couples C101 to C325. 3 residues coordinate [4Fe-4S] cluster: C108, C112, and C115. S-adenosyl-L-methionine is bound by residues 153–154 (GE), S183, 206–208 (SLH), and N282. Residue C325 is the S-methylcysteine intermediate of the active site.

The protein belongs to the radical SAM superfamily. RlmN family. [4Fe-4S] cluster is required as a cofactor.

The protein resides in the cytoplasm. This is Probable RNA methyltransferase PA14_40730 from Pseudomonas aeruginosa (strain UCBPP-PA14).